A 306-amino-acid chain; its full sequence is D-alanine--D-alanine ligase (306 aa).

The 199-residue stretch at 102-300 (KHVAKAAGIP…FGEFLRWMVE (199 aa)) folds into the ATP-grasp domain. 128–183 (PMKPPYVVKPVREGSSFGVVIVKEDQSHPPQVITSSEWRYGDRVMVERYIAGRELT) is a binding site for ATP. The Mg(2+) site is built by D252, E267, and N269.

The protein belongs to the D-alanine--D-alanine ligase family. Mg(2+) serves as cofactor. Mn(2+) is required as a cofactor.

The protein resides in the cytoplasm. The enzyme catalyses 2 D-alanine + ATP = D-alanyl-D-alanine + ADP + phosphate + H(+). It functions in the pathway cell wall biogenesis; peptidoglycan biosynthesis. Cell wall formation. The chain is D-alanine--D-alanine ligase from Sinorhizobium fredii (strain NBRC 101917 / NGR234).